The sequence spans 1051 residues: Protein ALWAYS EARLY 2 (1051 aa).

Composition is skewed to basic residues over residues 1 to 11 (MAPVRKSRSVN) and 27 to 36 (SKKNKLRKKL). Residues 1 to 37 (MAPVRKSRSVNKRFTNETSPRKDAGKSKKNKLRKKLS) form a disordered region. In terms of domain architecture, SANT spans 39–93 (KLGPQWTRLELERFYDAYRKHGQEWRRVAAAIRNSRSVDMVEALFNMNRAYLSLP). Disordered regions lie at residues 114 to 158 (EGSG…IGSP), 170 to 210 (ANGT…RKQF), 225 to 293 (TDAS…KDTT), 323 to 375 (AECN…TSGA), 397 to 605 (SELS…SSRS), and 948 to 981 (SIEHHHNPSPSNGSEPVANNDLNSQDGSEKNAQM). Basic and acidic residues predominate over residues 120-130 (GEGHDASEVPR). Residues 131–140 (KQQKRKRAKP) are compositionally biased toward basic residues. The segment covering 279 to 293 (ESSRERKLDSDKDTT) has biased composition (basic and acidic residues). Residues 323-332 (AECNDSDDNG) are compositionally biased toward acidic residues. Basic and acidic residues-rich tracts occupy residues 350–372 (AAIEASREKYSPRSPKKRDDKHT) and 403–417 (LKEERTEYDMDEKSS). Residues 560–574 (KQVSDSGPTSLSQKP) are compositionally biased toward polar residues. Over residues 586 to 597 (LQEKAKSSETTH) the composition is skewed to basic and acidic residues. Positions 967 to 981 (NDLNSQDGSEKNAQM) are enriched in polar residues.

Interacts with SNL1 (via PAH3). As to expression, expressed ubiquitously in vegetative and reproductive tissues.

Its subcellular location is the nucleus. In Arabidopsis thaliana (Mouse-ear cress), this protein is Protein ALWAYS EARLY 2 (ALY2).